Reading from the N-terminus, the 333-residue chain is Photosystem II assembly lipoprotein Ycf48 (333 aa).

Positions 1 to 23 are cleaved as a signal peptide; sequence MNRLLSSAVNLLLVLVLGVGLSG. Cys24 carries the N-palmitoyl cysteine lipid modification. A lipid anchor (S-diacylglycerol cysteine) is attached at Cys24.

It belongs to the Ycf48 family. As to quaternary structure, part of early PSII assembly complexes which includes D1 (psbA) and PsbI; not found in mature PSII. Binds to the lumenal side of PSII complexes. Interacts with YidC.

The protein resides in the cellular thylakoid membrane. Its function is as follows. A factor required for optimal assembly of photosystem II (PSII), acting in the early stages of PSII assembly. Also plays a role in replacement of photodamaged D1 (psbA). Assists YidC in synthesis of chlorophyll-binding proteins. The polypeptide is Photosystem II assembly lipoprotein Ycf48 (Synechococcus sp. (strain CC9902)).